The sequence spans 118 residues: NADH-quinone oxidoreductase subunit A (118 aa).

3 helical membrane-spanning segments follow: residues 6 to 26, 64 to 84, and 87 to 107; these read LPVL…LLMG, AILF…AVVF, and IGMT…VGFI.

It belongs to the complex I subunit 3 family. In terms of assembly, NDH-1 is composed of 14 different subunits. Subunits NuoA, H, J, K, L, M, N constitute the membrane sector of the complex.

Its subcellular location is the cell inner membrane. It catalyses the reaction a quinone + NADH + 5 H(+)(in) = a quinol + NAD(+) + 4 H(+)(out). NDH-1 shuttles electrons from NADH, via FMN and iron-sulfur (Fe-S) centers, to quinones in the respiratory chain. The immediate electron acceptor for the enzyme in this species is believed to be ubiquinone. Couples the redox reaction to proton translocation (for every two electrons transferred, four hydrogen ions are translocated across the cytoplasmic membrane), and thus conserves the redox energy in a proton gradient. The protein is NADH-quinone oxidoreductase subunit A of Acidithiobacillus ferrooxidans (strain ATCC 53993 / BNL-5-31) (Leptospirillum ferrooxidans (ATCC 53993)).